The chain runs to 170 residues: Shikimate kinase (170 aa).

Position 15 to 20 (15 to 20 (GAGKTT)) interacts with ATP. Thr19 serves as a coordination point for Mg(2+). Asp37, Arg61, and Gly83 together coordinate substrate. Arg121 lines the ATP pocket. Arg140 serves as a coordination point for substrate.

Belongs to the shikimate kinase family. As to quaternary structure, monomer. The cofactor is Mg(2+).

It is found in the cytoplasm. It carries out the reaction shikimate + ATP = 3-phosphoshikimate + ADP + H(+). The protein operates within metabolic intermediate biosynthesis; chorismate biosynthesis; chorismate from D-erythrose 4-phosphate and phosphoenolpyruvate: step 5/7. In terms of biological role, catalyzes the specific phosphorylation of the 3-hydroxyl group of shikimic acid using ATP as a cosubstrate. The chain is Shikimate kinase from Neisseria meningitidis serogroup C (strain 053442).